The sequence spans 457 residues: Protein trichome birefringence-like 4 (457 aa).

Residues 19-37 (IFLTSLFFLSLFLLSSSSL) form a helical; Signal-anchor for type II membrane protein membrane-spanning segment. The GDS motif motif lies at 173–175 (GDS). The short motif at 420 to 434 (DCSHWCLPGVPDSWN) is the DCXHWCLPGXXDXWN motif element.

This sequence belongs to the PC-esterase family. TBL subfamily.

The protein resides in the membrane. May act as a bridging protein that binds pectin and other cell wall polysaccharides. Probably involved in maintaining esterification of pectins. May be involved in the specific O-acetylation of cell wall polymers. The chain is Protein trichome birefringence-like 4 (TBL4) from Arabidopsis thaliana (Mouse-ear cress).